We begin with the raw amino-acid sequence, 160 residues long: Transcription antitermination protein NusB (160 aa).

It belongs to the NusB family.

Its function is as follows. Involved in transcription antitermination. Required for transcription of ribosomal RNA (rRNA) genes. Binds specifically to the boxA antiterminator sequence of the ribosomal RNA (rrn) operons. This Sinorhizobium fredii (strain NBRC 101917 / NGR234) protein is Transcription antitermination protein NusB.